The following is a 192-amino-acid chain: Ion-translocating oxidoreductase complex subunit B (192 aa).

Residues Met-1–Ser-26 form a hydrophobic region. A 4Fe-4S domain is found at Glu-32–Val-91. [4Fe-4S] cluster contacts are provided by Cys-49, Cys-52, Cys-57, Cys-74, Cys-117, Cys-120, Cys-123, Cys-127, Cys-147, Cys-150, Cys-153, and Cys-157. 2 4Fe-4S ferredoxin-type domains span residues Met-108–Arg-137 and Ala-138–Val-167.

The protein belongs to the 4Fe4S bacterial-type ferredoxin family. RnfB subfamily. The complex is composed of six subunits: RsxA, RsxB, RsxC, RsxD, RsxE and RsxG. [4Fe-4S] cluster is required as a cofactor.

It is found in the cell inner membrane. Part of a membrane-bound complex that couples electron transfer with translocation of ions across the membrane. Required to maintain the reduced state of SoxR. The polypeptide is Ion-translocating oxidoreductase complex subunit B (Escherichia coli O139:H28 (strain E24377A / ETEC)).